Reading from the N-terminus, the 696-residue chain is Mitosis initiation protein fs(1)Ya (696 aa).

3 disordered regions span residues 245–285 (NAST…RAWK), 336–379 (EHSS…YSTS), and 457–492 (IKFE…TPEI). Low complexity-rich tracts occupy residues 270–281 (QQQQQQQQPLQQ) and 361–379 (SESS…YSTS). The tract at residues 448–696 (TGAGINKKQI…REPIERMRRQ (249 aa)) is rich in charged AA. A phosphothreonine mark is found at Thr-478, Thr-484, and Thr-489. 2 short sequence motifs (nuclear localization signal) span residues 512 to 520 (PKKDKPKEK) and 534 to 538 (QPRVR). Disordered regions lie at residues 555-586 (DVGE…KLEA) and 603-696 (PASL…MRRQ). A compositionally biased stretch (acidic residues) spans 557-569 (GEPEVVDAEEEDE). 2 stretches are compositionally biased toward basic and acidic residues: residues 607–624 (RGER…DKEN) and 685–696 (RPREPIERMRRQ).

The protein localises to the nucleus envelope. Its subcellular location is the nucleus. It localises to the nucleoplasm. The protein resides in the cytoplasm. Its function is as follows. Cell cycle-dependent nuclear envelope component required for embryonic mitosis. The protein is Mitosis initiation protein fs(1)Ya (fs(1)Ya) of Drosophila melanogaster (Fruit fly).